A 315-amino-acid chain; its full sequence is Ester hydrolase C11orf54 homolog (315 aa).

Zn(2+) is bound by residues His-266, His-268, and His-278.

As to quaternary structure, monomer.

Its subcellular location is the nucleus. Exhibits ester hydrolase activity on the substrate p-nitrophenyl acetate. The chain is Ester hydrolase C11orf54 homolog from Bos taurus (Bovine).